Here is a 746-residue protein sequence, read N- to C-terminus: Methyl-CpG-binding domain-containing protein 13 (746 aa).

Short sequence motifs (nuclear localization signal) lie at residues 13–20 and 44–51; these read ERKVEIRV and IKKLEITN. An MBD domain is found at 29-104; sequence VIVEKSAAQG…KESDIEDDDS (76 aa). Disordered regions lie at residues 131-157, 169-283, 295-328, 348-479, 518-562, and 696-746; these read IDDV…MTSD, LGKK…PTPE, PLDD…KTRT, TKVQ…LKSP, TAAG…SGSA, and EPDT…FSKD. Residues 169–180 show a composition bias toward basic and acidic residues; sequence LGKKEEVKDPIE. Over residues 190–199 the composition is skewed to polar residues; it reads RSQTKASTTE. Basic and acidic residues predominate over residues 244 to 260; it reads SSEKRITRSKVEEKKNE. A Nuclear localization signal motif is present at residues 256–263; sequence EKKNELSN. The span at 427–451 shows a compositional bias: polar residues; that stretch reads VAQSCNEQSSQKPHAAAATSNNRVS. Residues 465-476 are compositionally biased toward basic residues; sequence VGRKPSKDKKTL. Composition is skewed to polar residues over residues 529 to 546 and 702 to 730; these read PKAN…SPLR and KSQG…TNKT. Over residues 732–746 the composition is skewed to basic and acidic residues; it reads GKPDDLRFTQSFSKD.

The protein localises to the nucleus. Probable transcriptional regulator. The chain is Methyl-CpG-binding domain-containing protein 13 (MBD13) from Arabidopsis thaliana (Mouse-ear cress).